We begin with the raw amino-acid sequence, 535 residues long: Bifunctional purine biosynthesis protein PurH (535 aa).

An MGS-like domain is found at 6–151; the sequence is TRLPVRRALI…KNHKDVAIVV (146 aa).

Belongs to the PurH family.

It carries out the reaction (6R)-10-formyltetrahydrofolate + 5-amino-1-(5-phospho-beta-D-ribosyl)imidazole-4-carboxamide = 5-formamido-1-(5-phospho-D-ribosyl)imidazole-4-carboxamide + (6S)-5,6,7,8-tetrahydrofolate. It catalyses the reaction IMP + H2O = 5-formamido-1-(5-phospho-D-ribosyl)imidazole-4-carboxamide. It functions in the pathway purine metabolism; IMP biosynthesis via de novo pathway; 5-formamido-1-(5-phospho-D-ribosyl)imidazole-4-carboxamide from 5-amino-1-(5-phospho-D-ribosyl)imidazole-4-carboxamide (10-formyl THF route): step 1/1. The protein operates within purine metabolism; IMP biosynthesis via de novo pathway; IMP from 5-formamido-1-(5-phospho-D-ribosyl)imidazole-4-carboxamide: step 1/1. The polypeptide is Bifunctional purine biosynthesis protein PurH (Pseudomonas putida (strain ATCC 700007 / DSM 6899 / JCM 31910 / BCRC 17059 / LMG 24140 / F1)).